A 120-amino-acid polypeptide reads, in one-letter code: uncharacterized protein (120 aa).

A signal peptide spans 1 to 19 (MKKIVCAVVALLLTLPAWA).

This is an uncharacterized protein from Salmonella typhimurium (strain LT2 / SGSC1412 / ATCC 700720).